Consider the following 614-residue polypeptide: DNA ligase (614 aa).

NAD(+)-binding positions include 29 to 33 and 73 to 74; these read DQDYD and SI. Lys-111 acts as the N6-AMP-lysine intermediate in catalysis. NAD(+) contacts are provided by Arg-127, Glu-158, and Lys-270. 4 residues coordinate Zn(2+): Cys-358, Cys-361, Cys-374, and Cys-380. Residues 538–614 enclose the BRCT domain; it reads TLTHELFDKK…MTETDYLSKI (77 aa).

This sequence belongs to the NAD-dependent DNA ligase family. LigA subfamily. It depends on Mg(2+) as a cofactor. Requires Mn(2+) as cofactor.

The catalysed reaction is NAD(+) + (deoxyribonucleotide)n-3'-hydroxyl + 5'-phospho-(deoxyribonucleotide)m = (deoxyribonucleotide)n+m + AMP + beta-nicotinamide D-nucleotide.. Its function is as follows. DNA ligase that catalyzes the formation of phosphodiester linkages between 5'-phosphoryl and 3'-hydroxyl groups in double-stranded DNA using NAD as a coenzyme and as the energy source for the reaction. It is essential for DNA replication and repair of damaged DNA. The chain is DNA ligase from Ruthia magnifica subsp. Calyptogena magnifica.